Consider the following 576-residue polypeptide: Sodium/hydrogen exchanger 8 (576 aa).

The next 11 membrane-spanning stretches (helical) occupy residues 55 to 75 (MTIF…HLLI), 79 to 99 (LHFL…GAVI), 118 to 138 (PNMF…YSLH), 151 to 171 (LFAV…IYFL), 186 to 206 (FAFG…IFNA), 256 to 276 (LGYF…TGLI), 306 to 326 (GLAE…GIVM), 349 to 369 (VAFL…FSFP), 374 to 394 (ISFV…NIFP), 412 to 432 (MFIM…SLHL), and 446 to 466 (TTIV…MPLI). T505 carries the phosphothreonine modification. Residues S566 and S568 each carry the phosphoserine modification.

Belongs to the monovalent cation:proton antiporter 1 (CPA1) transporter (TC 2.A.36) family. As to expression, predominantly expressed in the liver, skeletal muscle, kidney, and testis. Expressed in both renal cortex and medulla. Detected throughout the entire gastrointestinal tract, with high expression detected in stomach, duodenum and ascending colon. In gastric epithelium; expressed in the glands within the fundus and pylorus regions.

It is found in the golgi apparatus membrane. Its subcellular location is the golgi apparatus. The protein resides in the trans-Golgi network membrane. It localises to the endosome. The protein localises to the multivesicular body membrane. It is found in the apical cell membrane. Its subcellular location is the cytoplasmic vesicle. The protein resides in the secretory vesicle. It localises to the acrosome. The catalysed reaction is Na(+)(in) + H(+)(out) = Na(+)(out) + H(+)(in). Na(+)/H(+) antiporter. Mediates the electoneutral exchange of intracellular H(+) ions for extracellular Na(+) in 1:1 stoichiometry. Acts as an Na(+)/H(+) exchanger in the trans-Golgi. Contributes to the regulation of pH regulation of Golgi apparatus, and consequently, in protein trafficking and endosomal morphology. Plays a crucial role in germ cells in acrosome biogenesis and sperm development, probably by playing a role in the fusion of the Golgi-derived vesicles that form the acrosomal cap. Can also be active at the cell surface of specialized cells. In the small intestine, plays a major physiological role in transepithelial absorption of Na(+). Regulates intracellular pH homeostasis of intestinal epithelial cells. Acts as an important regulator of mucosal integrity in the intestine and in the stomach, could mediate the pH fluctuation necessary for mucin exocytosis or assist membrane trafficking of other proteins. Plays a role in photoreceptor survival and in the maintenance of intracellular pH homeostasis in retinal pigment epithelium (RPE cells). The protein is Sodium/hydrogen exchanger 8 (Slc9a8) of Mus musculus (Mouse).